The chain runs to 101 residues: UPF0473 protein MGAS10750_Spy1887 (101 aa).

This sequence belongs to the UPF0473 family.

The chain is UPF0473 protein MGAS10750_Spy1887 from Streptococcus pyogenes serotype M4 (strain MGAS10750).